Here is a 95-residue protein sequence, read N- to C-terminus: 6 kDa early secretory antigenic target homolog (95 aa).

Belongs to the WXG100 family. ESAT-6 subfamily. As to quaternary structure, forms a tight 1:1 complex with EsxB.

The protein resides in the secreted. Functionally, a secreted protein that might play a role in virulence. The chain is 6 kDa early secretory antigenic target homolog (esxA) from Mycobacterium leprae (strain TN).